A 309-amino-acid polypeptide reads, in one-letter code: UDP-N-acetylenolpyruvoylglucosamine reductase (309 aa).

One can recognise an FAD-binding PCMH-type domain in the interval 34 to 221; it reads RVGGPAQVLF…TAAREAAQPI (188 aa). The active site involves R179. The active-site Proton donor is S228. E298 is a catalytic residue.

Belongs to the MurB family. FAD serves as cofactor.

It localises to the cytoplasm. The enzyme catalyses UDP-N-acetyl-alpha-D-muramate + NADP(+) = UDP-N-acetyl-3-O-(1-carboxyvinyl)-alpha-D-glucosamine + NADPH + H(+). The protein operates within cell wall biogenesis; peptidoglycan biosynthesis. Its function is as follows. Cell wall formation. This is UDP-N-acetylenolpyruvoylglucosamine reductase from Methylorubrum populi (strain ATCC BAA-705 / NCIMB 13946 / BJ001) (Methylobacterium populi).